Reading from the N-terminus, the 517-residue chain is Tyrosine-protein kinase Fgr (517 aa).

A lipid anchor (N-myristoyl glycine) is attached at G2. Residues C3 and C6 are each lipidated (S-palmitoyl cysteine). S13 bears the Phosphoserine mark. Y32 carries the post-translational modification Phosphotyrosine. The residue at position 50 (S50) is a Phosphoserine. The 62-residue stretch at T65–S126 folds into the SH3 domain. Residues W102–W103 are interaction with CLNK. The region spanning W132 to C229 is the SH2 domain. Y196 bears the Phosphotyrosine mark. A Phosphoserine modification is found at S206. One can recognise a Protein kinase domain in the interval I251–F504. ATP contacts are provided by residues L257 to V265 and K279. D370 (proton acceptor) is an active-site residue. Y400 carries the post-translational modification Phosphotyrosine. Y511 bears the Phosphotyrosine; by SRC mark.

The protein belongs to the protein kinase superfamily. Tyr protein kinase family. SRC subfamily. Interacts with ITGB1, ITGB2, MS4A2/FCER1B, FCER1G and FCGR2. Interacts (via SH2 domain) with SYK (tyrosine phosphorylated). Interacts (via SH2 domain) with FLT3 (tyrosine phosphorylated). Interacts with PTK2/FAK1. Interacts (via SH2 domain) with HCLS1 (tyrosine phosphorylated by SYK). Interacts with SIRPA and PTPNS1. Interacts (not phosphorylated on tyrosine residues) with CBL; FGR tyrosine phosphorylation promotes dissociation. Interacts with CLNK. Ubiquitinated. Becomes ubiquitinated in response to ITGB2 signaling; this does not lead to degradation. In terms of processing, phosphorylated. Autophosphorylated on tyrosine residues. Becomes phosphorylated in response to FCGR2 engagement, cell adhesion and signaling by ITGB2. Prior phosphorylation at Tyr-511 by SRC inhibits ulterior autophosphorylation at Tyr-400. In terms of tissue distribution, expressed in natural killer cells (at protein level).

It is found in the cell membrane. The protein resides in the cell projection. The protein localises to the ruffle membrane. It localises to the cytoplasm. Its subcellular location is the cytosol. It is found in the cytoskeleton. The protein resides in the mitochondrion inner membrane. The protein localises to the mitochondrion intermembrane space. The enzyme catalyses L-tyrosyl-[protein] + ATP = O-phospho-L-tyrosyl-[protein] + ADP + H(+). Its activity is regulated as follows. Activated by autophosphorylation. Prior phosphorylation at Tyr-511 by SRC inhibits ulterior autophosphorylation at Tyr-400. Activated by phorbol myristate acetate, phosphatidic acid and poly-Lys. Binding (via SH2 domain) of HCLS1 that is already phosphorylated by SYK strongly increases kinase activity. In terms of biological role, non-receptor tyrosine-protein kinase that transmits signals from cell surface receptors devoid of kinase activity and contributes to the regulation of immune responses, including neutrophil, monocyte, macrophage and mast cell functions, cytoskeleton remodeling in response to extracellular stimuli, phagocytosis, cell adhesion and migration. Promotes mast cell degranulation, release of inflammatory cytokines and IgE-mediated anaphylaxis. Acts downstream of receptors that bind the Fc region of immunoglobulins, such as MS4A2/FCER1B, FCER1G and FCGR2. Acts downstream of ITGB1 and ITGB2, and regulates actin cytoskeleton reorganization, cell spreading and adhesion. Depending on the context, activates or inhibits cellular responses. Functions as a negative regulator of ITGB2 signaling, phagocytosis and SYK activity in monocytes. Required for normal ITGB1 and ITGB2 signaling, normal cell spreading and adhesion in neutrophils and macrophages. Functions as a positive regulator of cell migration and regulates cytoskeleton reorganization via RAC1 activation. Phosphorylates SYK (in vitro) and promotes SYK-dependent activation of AKT1 and MAP kinase signaling. Phosphorylates PLD2 in antigen-stimulated mast cells, leading to PLD2 activation and the production of the signaling molecules lysophosphatidic acid and diacylglycerol. Promotes activation of PIK3R1. Phosphorylates FASLG, and thereby regulates its ubiquitination and subsequent internalization. Phosphorylates ABL1. Promotes phosphorylation of CBL, CTTN, PIK3R1, PTK2/FAK1, PTK2B/PYK2 and VAV2. Phosphorylates HCLS1 that has already been phosphorylated by SYK, but not unphosphorylated HCLS1. Together with CLNK, it acts as a negative regulator of natural killer cell-activating receptors and inhibits interferon-gamma production. In Mus musculus (Mouse), this protein is Tyrosine-protein kinase Fgr (Fgr).